The following is a 260-amino-acid chain: Indole-3-glycerol phosphate synthase (260 aa).

This sequence belongs to the TrpC family.

The catalysed reaction is 1-(2-carboxyphenylamino)-1-deoxy-D-ribulose 5-phosphate + H(+) = (1S,2R)-1-C-(indol-3-yl)glycerol 3-phosphate + CO2 + H2O. It functions in the pathway amino-acid biosynthesis; L-tryptophan biosynthesis; L-tryptophan from chorismate: step 4/5. The chain is Indole-3-glycerol phosphate synthase from Lacticaseibacillus paracasei (strain ATCC 334 / BCRC 17002 / CCUG 31169 / CIP 107868 / KCTC 3260 / NRRL B-441) (Lactobacillus paracasei).